Consider the following 209-residue polypeptide: Ribonuclease HII (209 aa).

Residues 20-209 (QLEIGIDEVG…KSFLTKLNLI (190 aa)) enclose the RNase H type-2 domain. A divalent metal cation is bound by residues D26, E27, and D122.

It belongs to the RNase HII family. Mn(2+) serves as cofactor. Mg(2+) is required as a cofactor.

It localises to the cytoplasm. The catalysed reaction is Endonucleolytic cleavage to 5'-phosphomonoester.. Functionally, endonuclease that specifically degrades the RNA of RNA-DNA hybrids. This chain is Ribonuclease HII, found in Prochlorococcus marinus (strain MIT 9515).